The primary structure comprises 458 residues: BUD13 homolog (458 aa).

3 disordered regions span residues 16-37 (SGDI…SGLR), 81-328 (KQTF…TEEL), and 437-458 (AKTE…AEYE). Residues 138–148 (NRHDSDKDNSP) show a composition bias toward basic and acidic residues. Composition is skewed to basic residues over residues 175 to 185 (RNRRSPPRTRR) and 208 to 218 (PRRRPSSPARR). Basic and acidic residues-rich tracts occupy residues 219–243 (RKDD…KKEE), 266–284 (RDLK…KMFE), and 314–328 (DQAK…TEEL). Residues 262-356 (LQSARDLKEE…AQLEEMARVA (95 aa)) are a coiled coil.

The protein belongs to the CWC26 family.

The protein is BUD13 homolog of Caenorhabditis elegans.